Reading from the N-terminus, the 190-residue chain is Imidazoleglycerol-phosphate dehydratase (190 aa).

It belongs to the imidazoleglycerol-phosphate dehydratase family.

The protein resides in the cytoplasm. It catalyses the reaction D-erythro-1-(imidazol-4-yl)glycerol 3-phosphate = 3-(imidazol-4-yl)-2-oxopropyl phosphate + H2O. Its pathway is amino-acid biosynthesis; L-histidine biosynthesis; L-histidine from 5-phospho-alpha-D-ribose 1-diphosphate: step 6/9. The protein is Imidazoleglycerol-phosphate dehydratase of Sulfurovum sp. (strain NBC37-1).